A 520-amino-acid polypeptide reads, in one-letter code: Chaperone Ric-8B (520 aa).

Ser-468 carries the phosphoserine modification. Thr-473 is modified (phosphothreonine).

This sequence belongs to the synembryn family. In terms of assembly, interacts with GDP-bound G(s) G-alpha proteins GNAL and GNAS. Does not interact with G-alpha proteins when they are in complex with subunits beta and gamma.

The protein resides in the cytoplasm. Its subcellular location is the cell cortex. Its function is as follows. Chaperone that specifically binds and folds nascent G(s) G-alpha proteins (GNAS and GNAL) prior to G protein heterotrimer formation, promoting their association with the plasma membrane. Also acts as a guanine nucleotide exchange factor (GEF) for G(s) proteins by stimulating exchange of bound GDP for free GTP. Acts as an important component for odorant signal transduction by mediating GNAL (G(olf)-alpha) folding, thereby promoting-dependent cAMP accumulation in olfactory sensory neurons. This is Chaperone Ric-8B (Ric8b) from Rattus norvegicus (Rat).